Here is a 120-residue protein sequence, read N- to C-terminus: UPF0382 membrane protein SSP2132 (120 aa).

4 consecutive transmembrane segments (helical) span residues 3–23 (VFII…AFGA), 46–66 (MYHG…SINV), 69–89 (VGWL…ILAL), and 94–114 (IIGA…LMLV).

This sequence belongs to the UPF0382 family.

The protein localises to the cell membrane. The chain is UPF0382 membrane protein SSP2132 from Staphylococcus saprophyticus subsp. saprophyticus (strain ATCC 15305 / DSM 20229 / NCIMB 8711 / NCTC 7292 / S-41).